A 178-amino-acid polypeptide reads, in one-letter code: SCAN domain-containing protein 1 (178 aa).

Residues 1–107 (MAATEQSLAP…GSRPGPETFR (107 aa)) form a disordered region. Residues 9-18 (APAGSSAPPS) are compositionally biased toward low complexity. The span at 36-54 (GSSSTPEAPSIPDSSNPSA) shows a compositional bias: polar residues. The 72-residue stretch at 107-178 (RQRFRQFRYQ…RRRTDVRITG (72 aa)) folds into the SCAN box domain.

Interacts with ZNF202.

It localises to the nucleus. Functionally, may regulate transcriptional activity. The chain is SCAN domain-containing protein 1 (SCAND1) from Bos taurus (Bovine).